The primary structure comprises 447 residues: Na(+)-translocating NADH-quinone reductase subunit A (447 aa).

It belongs to the NqrA family. As to quaternary structure, composed of six subunits; NqrA, NqrB, NqrC, NqrD, NqrE and NqrF.

The enzyme catalyses a ubiquinone + n Na(+)(in) + NADH + H(+) = a ubiquinol + n Na(+)(out) + NAD(+). Functionally, NQR complex catalyzes the reduction of ubiquinone-1 to ubiquinol by two successive reactions, coupled with the transport of Na(+) ions from the cytoplasm to the periplasm. NqrA to NqrE are probably involved in the second step, the conversion of ubisemiquinone to ubiquinol. In Hahella chejuensis (strain KCTC 2396), this protein is Na(+)-translocating NADH-quinone reductase subunit A.